A 284-amino-acid polypeptide reads, in one-letter code: Acetyl-coenzyme A carboxylase carboxyl transferase subunit beta (284 aa).

A CoA carboxyltransferase N-terminal domain is found at 25–284; sequence LWTKCPKCES…ICRMLLQKSA (260 aa). Zn(2+) contacts are provided by C29, C32, C48, and C51. The C4-type zinc finger occupies 29–51; it reads CPKCESTLYRAEVRRNLEVCPKC.

Belongs to the AccD/PCCB family. In terms of assembly, acetyl-CoA carboxylase is a heterohexamer composed of biotin carboxyl carrier protein (AccB), biotin carboxylase (AccC) and two subunits each of ACCase subunit alpha (AccA) and ACCase subunit beta (AccD). Requires Zn(2+) as cofactor.

The protein resides in the cytoplasm. It carries out the reaction N(6)-carboxybiotinyl-L-lysyl-[protein] + acetyl-CoA = N(6)-biotinyl-L-lysyl-[protein] + malonyl-CoA. The protein operates within lipid metabolism; malonyl-CoA biosynthesis; malonyl-CoA from acetyl-CoA: step 1/1. Functionally, component of the acetyl coenzyme A carboxylase (ACC) complex. Biotin carboxylase (BC) catalyzes the carboxylation of biotin on its carrier protein (BCCP) and then the CO(2) group is transferred by the transcarboxylase to acetyl-CoA to form malonyl-CoA. The polypeptide is Acetyl-coenzyme A carboxylase carboxyl transferase subunit beta (Hydrogenovibrio crunogenus (strain DSM 25203 / XCL-2) (Thiomicrospira crunogena)).